The chain runs to 444 residues: Tol-Pal system protein TolB (444 aa).

Positions methionine 1–alanine 26 are cleaved as a signal peptide. A compositionally biased stretch (polar residues) spans isoleucine 281–glycine 310. Positions isoleucine 281–serine 311 are disordered.

It belongs to the TolB family. As to quaternary structure, the Tol-Pal system is composed of five core proteins: the inner membrane proteins TolA, TolQ and TolR, the periplasmic protein TolB and the outer membrane protein Pal. They form a network linking the inner and outer membranes and the peptidoglycan layer.

Its subcellular location is the periplasm. In terms of biological role, part of the Tol-Pal system, which plays a role in outer membrane invagination during cell division and is important for maintaining outer membrane integrity. In Cereibacter sphaeroides (strain ATCC 17029 / ATH 2.4.9) (Rhodobacter sphaeroides), this protein is Tol-Pal system protein TolB.